Consider the following 64-residue polypeptide: Large ribosomal subunit protein uL29 (64 aa).

The protein belongs to the universal ribosomal protein uL29 family.

This chain is Large ribosomal subunit protein uL29, found in Acaryochloris marina (strain MBIC 11017).